Consider the following 82-residue polypeptide: Sulfur carrier protein TusA (82 aa).

The Cysteine persulfide intermediate role is filled by C19.

It belongs to the sulfur carrier protein TusA family. In terms of assembly, interacts with IscS.

It is found in the cytoplasm. Its pathway is tRNA modification. Sulfur carrier protein involved in sulfur trafficking in the cell. Part of a sulfur-relay system required for 2-thiolation during synthesis of 2-thiouridine of the modified wobble base 5-methylaminomethyl-2-thiouridine (mnm(5)s(2)U) in tRNA. Interacts with IscS and stimulates its cysteine desulfurase activity. Accepts an activated sulfur from IscS, which is then transferred to TusD, and thus determines the direction of sulfur flow from IscS to 2-thiouridine formation. Also appears to be involved in sulfur transfer for the biosynthesis of molybdopterin. This is Sulfur carrier protein TusA from Edwardsiella ictaluri (strain 93-146).